The following is a 525-amino-acid chain: D-arabinono-1,4-lactone oxidase (525 aa).

The FAD-binding PCMH-type domain occupies 23-197 (YSCRPQLYFQ…VKATIRVIPE (175 aa)). Residue H60 is modified to Pros-8alpha-FAD histidine.

It belongs to the oxygen-dependent FAD-linked oxidoreductase family. FAD serves as cofactor.

The protein localises to the mitochondrion membrane. The enzyme catalyses D-arabinono-1,4-lactone + O2 = dehydro-D-arabinono-1,4-lactone + H2O2 + H(+). It participates in cofactor biosynthesis; D-erythroascorbate biosynthesis; dehydro-D-arabinono-1,4-lactone from D-arabinose: step 2/2. The chain is D-arabinono-1,4-lactone oxidase (ALO1) from Kluyveromyces lactis (strain ATCC 8585 / CBS 2359 / DSM 70799 / NBRC 1267 / NRRL Y-1140 / WM37) (Yeast).